A 503-amino-acid chain; its full sequence is 2-isopropylmalate synthase (503 aa).

The region spanning 4 to 264 (LYIFDTTLRD…EVSIKTEEIY (261 aa)) is the Pyruvate carboxyltransferase domain. Residues Asp-13, His-201, His-203, and Asn-237 each contribute to the Mn(2+) site. Residues 388-503 (KLRHLQVVSG…NQLVMLKGKD (116 aa)) are regulatory domain.

Belongs to the alpha-IPM synthase/homocitrate synthase family. LeuA type 1 subfamily. In terms of assembly, homodimer. Mn(2+) is required as a cofactor.

It localises to the cytoplasm. The enzyme catalyses 3-methyl-2-oxobutanoate + acetyl-CoA + H2O = (2S)-2-isopropylmalate + CoA + H(+). Its pathway is amino-acid biosynthesis; L-leucine biosynthesis; L-leucine from 3-methyl-2-oxobutanoate: step 1/4. In terms of biological role, catalyzes the condensation of the acetyl group of acetyl-CoA with 3-methyl-2-oxobutanoate (2-ketoisovalerate) to form 3-carboxy-3-hydroxy-4-methylpentanoate (2-isopropylmalate). The protein is 2-isopropylmalate synthase of Dictyoglomus turgidum (strain DSM 6724 / Z-1310).